The chain runs to 189 residues: Transcription factor FapR (189 aa).

The protein belongs to the FapR family.

Functionally, transcriptional factor involved in regulation of membrane lipid biosynthesis by repressing genes involved in fatty acid and phospholipid metabolism. The sequence is that of Transcription factor FapR from Listeria innocua serovar 6a (strain ATCC BAA-680 / CLIP 11262).